The chain runs to 115 residues: Large ribosomal subunit protein bL19 (115 aa).

The protein belongs to the bacterial ribosomal protein bL19 family.

Its function is as follows. This protein is located at the 30S-50S ribosomal subunit interface and may play a role in the structure and function of the aminoacyl-tRNA binding site. The polypeptide is Large ribosomal subunit protein bL19 (Wigglesworthia glossinidia brevipalpis).